The primary structure comprises 381 residues: 4-hydroxyphenylpyruvate dioxygenase (381 aa).

2 consecutive VOC domains span residues 22–156 (GMDA…LVDR) and 184–338 (AIDH…IFTK). Residues histidine 187, histidine 270, and glutamate 349 each coordinate Fe cation.

This sequence belongs to the 4HPPD family. In terms of assembly, homodimer. It depends on Fe cation as a cofactor.

It carries out the reaction 3-(4-hydroxyphenyl)pyruvate + O2 = homogentisate + CO2. It participates in amino-acid degradation; L-phenylalanine degradation; acetoacetate and fumarate from L-phenylalanine: step 3/6. The protein is 4-hydroxyphenylpyruvate dioxygenase (hpd) of Streptomyces avermitilis (strain ATCC 31267 / DSM 46492 / JCM 5070 / NBRC 14893 / NCIMB 12804 / NRRL 8165 / MA-4680).